The following is a 52-amino-acid chain: Alpha-1-antiproteinase 3 (52 aa).

The tract at residues 1–20 (EDLQGDAVPEEXATKDDNEH) is disordered.

The protein belongs to the serpin family. In terms of processing, N-glycosylated; contains glycans with bi- and triantennary side chains. As to expression, plasma.

The protein localises to the secreted. The polypeptide is Alpha-1-antiproteinase 3 (Equus caballus (Horse)).